A 233-amino-acid chain; its full sequence is Leucyl/phenylalanyl-tRNA--protein transferase (233 aa).

This sequence belongs to the L/F-transferase family.

The protein localises to the cytoplasm. The catalysed reaction is N-terminal L-lysyl-[protein] + L-leucyl-tRNA(Leu) = N-terminal L-leucyl-L-lysyl-[protein] + tRNA(Leu) + H(+). It catalyses the reaction N-terminal L-arginyl-[protein] + L-leucyl-tRNA(Leu) = N-terminal L-leucyl-L-arginyl-[protein] + tRNA(Leu) + H(+). The enzyme catalyses L-phenylalanyl-tRNA(Phe) + an N-terminal L-alpha-aminoacyl-[protein] = an N-terminal L-phenylalanyl-L-alpha-aminoacyl-[protein] + tRNA(Phe). Its function is as follows. Functions in the N-end rule pathway of protein degradation where it conjugates Leu, Phe and, less efficiently, Met from aminoacyl-tRNAs to the N-termini of proteins containing an N-terminal arginine or lysine. This chain is Leucyl/phenylalanyl-tRNA--protein transferase, found in Anaeromyxobacter dehalogenans (strain 2CP-1 / ATCC BAA-258).